Consider the following 176-residue polypeptide: Adenine phosphoribosyltransferase (176 aa).

Belongs to the purine/pyrimidine phosphoribosyltransferase family. As to quaternary structure, homodimer.

The protein localises to the cytoplasm. It carries out the reaction AMP + diphosphate = 5-phospho-alpha-D-ribose 1-diphosphate + adenine. The protein operates within purine metabolism; AMP biosynthesis via salvage pathway; AMP from adenine: step 1/1. Its function is as follows. Catalyzes a salvage reaction resulting in the formation of AMP, that is energically less costly than de novo synthesis. The sequence is that of Adenine phosphoribosyltransferase from Methylobacillus flagellatus (strain ATCC 51484 / DSM 6875 / VKM B-1610 / KT).